A 63-amino-acid polypeptide reads, in one-letter code: Large ribosomal subunit protein bL32 (63 aa).

It belongs to the bacterial ribosomal protein bL32 family.

The sequence is that of Large ribosomal subunit protein bL32 from Lactobacillus delbrueckii subsp. bulgaricus (strain ATCC 11842 / DSM 20081 / BCRC 10696 / JCM 1002 / NBRC 13953 / NCIMB 11778 / NCTC 12712 / WDCM 00102 / Lb 14).